Reading from the N-terminus, the 170-residue chain is Translationally-controlled tumor protein homolog (170 aa).

The 170-residue stretch at 1-170 (MLIYSDIITG…WKHGLKETKV (170 aa)) folds into the TCTP domain.

Belongs to the TCTP family.

It is found in the cytoplasm. Its subcellular location is the cytoskeleton. Its function is as follows. Involved in protein synthesis. Involved in microtubule stabilization. In Neurospora crassa (strain ATCC 24698 / 74-OR23-1A / CBS 708.71 / DSM 1257 / FGSC 987), this protein is Translationally-controlled tumor protein homolog.